The chain runs to 308 residues: Ribonuclease 3 (308 aa).

Residues 20-145 form the RNase III domain; sequence YLRFYKMLGF…LVGAIYLDRG (126 aa). E62 is a binding site for Mg(2+). D66 is a catalytic residue. Residues N131 and E134 each contribute to the Mg(2+) site. The active site involves E134. One can recognise a DRBM domain in the interval 173-242; the sequence is NFKSKLIEWS…ARVALGKIKN (70 aa). Residues 261 to 281 are disordered; that stretch reads QEEVTVSDSKPSDSGAVTPDL.

It belongs to the ribonuclease III family. In terms of assembly, homodimer. The cofactor is Mg(2+).

The protein resides in the cytoplasm. The enzyme catalyses Endonucleolytic cleavage to 5'-phosphomonoester.. In terms of biological role, digests double-stranded RNA. Involved in the processing of primary rRNA transcript to yield the immediate precursors to the large and small rRNAs (23S and 16S). Processes some mRNAs, and tRNAs when they are encoded in the rRNA operon. Processes pre-crRNA and tracrRNA of type II CRISPR loci if present in the organism. The polypeptide is Ribonuclease 3 (Phocaeicola vulgatus (strain ATCC 8482 / DSM 1447 / JCM 5826 / CCUG 4940 / NBRC 14291 / NCTC 11154) (Bacteroides vulgatus)).